A 401-amino-acid polypeptide reads, in one-letter code: G2/mitotic-specific cyclin-B1 (401 aa).

It belongs to the cyclin family. Cyclin AB subfamily. Interacts with the CDK1 protein kinase to form a serine/threonine kinase holoenzyme complex also known as maturation promoting factor (MPF). The cyclin subunit imparts substrate specificity to the complex.

In terms of biological role, essential for the control of the cell cycle at the G2/M (mitosis) transition. The chain is G2/mitotic-specific cyclin-B1 (ccnb1) from Oryzias luzonensis (Luzon ricefish).